Reading from the N-terminus, the 157-residue chain is Cyclic pyranopterin monophosphate synthase (157 aa).

Substrate-binding positions include 74-76 (MCH) and 112-113 (ME). Residue Asp-127 is part of the active site.

This sequence belongs to the MoaC family. In terms of assembly, homohexamer; trimer of dimers.

The enzyme catalyses (8S)-3',8-cyclo-7,8-dihydroguanosine 5'-triphosphate = cyclic pyranopterin phosphate + diphosphate. It participates in cofactor biosynthesis; molybdopterin biosynthesis. In terms of biological role, catalyzes the conversion of (8S)-3',8-cyclo-7,8-dihydroguanosine 5'-triphosphate to cyclic pyranopterin monophosphate (cPMP). In Campylobacter lari (strain RM2100 / D67 / ATCC BAA-1060), this protein is Cyclic pyranopterin monophosphate synthase.